We begin with the raw amino-acid sequence, 689 residues long: MSEKTFLVEIGTEELPPKALRSLAESFAANFTAELDNAGLAHGNVEWFAAPRRLALKVANLAESQPDREVEKRGPAIAQAFDAEGKPSKAAEGWARGCGITVDQAERLKTDKGEWLLYRAHVKGESTEALVPNMVVTSLAKLPIPKLMRWGASDVHFVRPVHTVTLLLGDKVIPATILGIQSDRVIRGHRFMGEPEFTIDSAEQYPQILLERGKVIADYEARKAKIKADAEEAARKIGGNADLSESLLEEVASLVEWPVVLTAKFEEKFLAVPAEALVYTMKGDQKYFPVYDNAGKLLPNFIFVANIESKDPTQIISGNEKVVRPRLADAEFFFNTDRKKRLEDHLPRLQTVLFQQQLGTLRDKTDRIQALAGWIAGQIGADVNHATRAGLLSKCDLMTNMVFEFTDTQGVMGMHYARHDGEAEDVAVALNEQYQPRFAGDDLPSNPVACALAIADKMDTLAGIFGIGQHPKGDKDPFALRRAALGVLRIIVEKNLNLDLQTLTEEAARLYGDKLTNANVVDDVIDFMLGRFRAWYQDEGYTVDTIQAVLARRPTRPADFDARMKAVSHFRTLEEASALAAANKRVSNILAKATEPLNDIVHASVLKEAAEIELARHLVVLRDKLQPYFADGRYQEALIELAALRAPVDEFFENVMVNAEEKDIRINRLTLLSKLRELFLQVADISLLQ.

It belongs to the class-II aminoacyl-tRNA synthetase family. Tetramer of two alpha and two beta subunits.

The protein resides in the cytoplasm. The enzyme catalyses tRNA(Gly) + glycine + ATP = glycyl-tRNA(Gly) + AMP + diphosphate. In Salmonella paratyphi A (strain ATCC 9150 / SARB42), this protein is Glycine--tRNA ligase beta subunit.